We begin with the raw amino-acid sequence, 106 residues long: UPF0145 protein AZOSEA16190 (106 aa).

Belongs to the UPF0145 family.

This chain is UPF0145 protein AZOSEA16190, found in Aromatoleum aromaticum (strain DSM 19018 / LMG 30748 / EbN1) (Azoarcus sp. (strain EbN1)).